The chain runs to 123 residues: MQNKIQVKSVETRENALIFCAENTEIEVKELSARNHVLVDSDNLSFLYILENESSFIYVSIPHTCWEAVHEAMNKDTAMFIRVNDVEIELEGLKEEVEYLVENIEGNANYGEELVTAVEKVFL.

The protein belongs to the UPF0738 family.

The sequence is that of UPF0738 protein BcerKBAB4_1107 from Bacillus mycoides (strain KBAB4) (Bacillus weihenstephanensis).